The chain runs to 229 residues: Flagellar L-ring protein (229 aa).

The first 23 residues, 1–23, serve as a signal peptide directing secretion; sequence MLSRLGARALVCLAGVAMLAASG. The N-palmitoyl cysteine moiety is linked to residue Cys24. Cys24 is lipidated: S-diacylglycerol cysteine.

Belongs to the FlgH family. The basal body constitutes a major portion of the flagellar organelle and consists of four rings (L,P,S, and M) mounted on a central rod.

It localises to the cell outer membrane. Its subcellular location is the bacterial flagellum basal body. Its function is as follows. Assembles around the rod to form the L-ring and probably protects the motor/basal body from shearing forces during rotation. The chain is Flagellar L-ring protein from Cupriavidus taiwanensis (strain DSM 17343 / BCRC 17206 / CCUG 44338 / CIP 107171 / LMG 19424 / R1) (Ralstonia taiwanensis (strain LMG 19424)).